A 261-amino-acid chain; its full sequence is [LysW]-aminoadipate/[LysW]-glutamate kinase (261 aa).

Residues Gly-35–Gly-36, Arg-62, and Asn-166 contribute to the substrate site.

This sequence belongs to the acetylglutamate kinase family. LysZ subfamily.

It localises to the cytoplasm. The enzyme catalyses [amino-group carrier protein]-C-terminal-N-(1,4-dicarboxybutan-1-yl)-L-glutamine + ATP = [amino-group carrier protein]-C-terminal-N-(1-carboxy-5-phosphooxy-5-oxopentan-1-yl)-L-glutamine + ADP. The catalysed reaction is [amino-group carrier protein]-C-terminal-gamma-(L-glutamyl)-L-glutamate + ATP = [amino-group carrier protein]-C-terminal-gamma-(5-phospho-L-glutamyl)-L-glutamate + ADP. It participates in amino-acid biosynthesis; L-lysine biosynthesis via AAA pathway; L-lysine from L-alpha-aminoadipate (Thermus route): step 2/5. Its pathway is amino-acid biosynthesis; L-arginine biosynthesis. Its function is as follows. Involved in both the arginine and lysine biosynthetic pathways. Phosphorylates the LysW-bound precursors glutamate (for arginine biosynthesis), respectively alpha-aminoadipate (for lysine biosynthesis). This Sulfolobus acidocaldarius (strain ATCC 33909 / DSM 639 / JCM 8929 / NBRC 15157 / NCIMB 11770) protein is [LysW]-aminoadipate/[LysW]-glutamate kinase.